Here is a 339-residue protein sequence, read N- to C-terminus: Proto-oncogene serine/threonine-protein kinase mos (339 aa).

The Protein kinase domain occupies 61-335 (VCLLHRLGSG…LLQKDLKAFR (275 aa)). ATP contacts are provided by residues 67 to 75 (LGSGGFGSV) and Lys-88. Catalysis depends on Asp-196, which acts as the Proton acceptor.

Belongs to the protein kinase superfamily. Ser/Thr protein kinase family. As to quaternary structure, interacts with MAP2K1/MEK1. Expressed mainly in gonadal tissues, and cardiac and skeletal muscles.

Its subcellular location is the cytoplasm. It catalyses the reaction L-seryl-[protein] + ATP = O-phospho-L-seryl-[protein] + ADP + H(+). The enzyme catalyses L-threonyl-[protein] + ATP = O-phospho-L-threonyl-[protein] + ADP + H(+). Its function is as follows. Serine/threonine kinase involved in the regulation of MAPK signaling. Is an activator of the ERK1/2 signaling cascade playing an essential role in the stimulation of oocyte maturation. This is Proto-oncogene serine/threonine-protein kinase mos from Rattus norvegicus (Rat).